Reading from the N-terminus, the 418-residue chain is Tyrosine--tRNA ligase (418 aa).

Tyr34 is an L-tyrosine binding site. The 'HIGH' region motif lies at 39–48 (PTADSLHLGH). L-tyrosine contacts are provided by Tyr169 and Gln173. The 'KMSKS' region signature appears at 229 to 233 (KFGKS). Lys232 is an ATP binding site. Residues 352–418 (NNIVELLVSS…GKKKYFVLTY (67 aa)) form the S4 RNA-binding domain.

It belongs to the class-I aminoacyl-tRNA synthetase family. TyrS type 1 subfamily. Homodimer.

The protein localises to the cytoplasm. It catalyses the reaction tRNA(Tyr) + L-tyrosine + ATP = L-tyrosyl-tRNA(Tyr) + AMP + diphosphate + H(+). Its function is as follows. Catalyzes the attachment of tyrosine to tRNA(Tyr) in a two-step reaction: tyrosine is first activated by ATP to form Tyr-AMP and then transferred to the acceptor end of tRNA(Tyr). In Streptococcus pneumoniae (strain CGSP14), this protein is Tyrosine--tRNA ligase.